Consider the following 101-residue polypeptide: Small ribosomal subunit protein bS18c (101 aa).

This sequence belongs to the bacterial ribosomal protein bS18 family. In terms of assembly, part of the 30S ribosomal subunit.

The protein localises to the plastid. Its subcellular location is the chloroplast. The protein is Small ribosomal subunit protein bS18c of Oenothera biennis (German evening primrose).